The chain runs to 74 residues: Protein krueppel (74 aa).

4 C2H2-type zinc fingers span residues 1-4, 10-32, 38-60, and 66-74; these read ERTH, FECP…MRLH, YHCS…LRVH, and YACELCAAK.

The protein belongs to the krueppel C2H2-type zinc-finger protein family.

The protein localises to the nucleus. In terms of biological role, krueppel is a gap class segmentation protein. This Apis mellifera (Honeybee) protein is Protein krueppel (Kr).